The following is a 503-amino-acid chain: Aspartyl/glutamyl-tRNA(Asn/Gln) amidotransferase subunit B (503 aa).

The protein belongs to the GatB/GatE family. GatB subfamily. In terms of assembly, heterotrimer of A, B and C subunits.

The catalysed reaction is L-glutamyl-tRNA(Gln) + L-glutamine + ATP + H2O = L-glutaminyl-tRNA(Gln) + L-glutamate + ADP + phosphate + H(+). The enzyme catalyses L-aspartyl-tRNA(Asn) + L-glutamine + ATP + H2O = L-asparaginyl-tRNA(Asn) + L-glutamate + ADP + phosphate + 2 H(+). Functionally, allows the formation of correctly charged Asn-tRNA(Asn) or Gln-tRNA(Gln) through the transamidation of misacylated Asp-tRNA(Asn) or Glu-tRNA(Gln) in organisms which lack either or both of asparaginyl-tRNA or glutaminyl-tRNA synthetases. The reaction takes place in the presence of glutamine and ATP through an activated phospho-Asp-tRNA(Asn) or phospho-Glu-tRNA(Gln). This Cereibacter sphaeroides (strain ATCC 17023 / DSM 158 / JCM 6121 / CCUG 31486 / LMG 2827 / NBRC 12203 / NCIMB 8253 / ATH 2.4.1.) (Rhodobacter sphaeroides) protein is Aspartyl/glutamyl-tRNA(Asn/Gln) amidotransferase subunit B.